The following is a 74-amino-acid chain: uncharacterized protein (74 aa).

This is an uncharacterized protein from Archaeoglobus fulgidus (strain ATCC 49558 / DSM 4304 / JCM 9628 / NBRC 100126 / VC-16).